Reading from the N-terminus, the 412-residue chain is MILASVLRSGPGGGLPLRPLLGPALALRARSTSATDTHHVEMARERSKTVTSFYNQSAIDAAAEKPSVRLTPTMMLYAGRSQDGSHLLKSARYLQQELPVRIAHRIKGFRCLPFIIGCNPTILHVHELYIRAFQKLTDFPPIKDQADEAQYCQLVRQLLDDHKDVVTLLAEGLRESRKHIEDEKLVRYFLDKTLTSRLGIRMLATHHLALHEDKPDFVGIICTRLSPKKIIEKWVDFARRLCEHKYGNAPRVRINGHVAARFPFIPMPLDYILPELLKNAMRATMESHLDTPYNVPDVVITIANNDVDLIIRISDRGGGIAHKDLDRVMDYHFTTAEASTQDPRISPLFGHLDMHSGAQSGPMHGFGFGLPTSRAYAEYLGGSLQLQSLQGIGTDVYLRLRHIDGREESFRI.

The N-terminal 30 residues, 1–30 (MILASVLRSGPGGGLPLRPLLGPALALRAR), are a transit peptide targeting the mitochondrion. At Ser-31 the chain carries Phosphoserine. Position 52 is a phosphoserine; by autocatalysis (Ser-52). Residues 159–404 (LDDHKDVVTL…DVYLRLRHID (246 aa)) enclose the Histidine kinase domain. 2 positions are modified to N6-acetyllysine: Lys-192 and Lys-233. 2 residues coordinate ATP: Asn-279 and Asp-315. Mg(2+) is bound at residue Asn-279. 3 residues coordinate K(+): Val-328, Asp-330, and Phe-333. Residues Thr-334 and Thr-335 each contribute to the ATP site. 2 positions are modified to phosphoserine: Ser-356 and Ser-360. ATP is bound by residues His-364, Gly-367, and Leu-370. Gly-367 provides a ligand contact to K(+).

Belongs to the PDK/BCKDK protein kinase family. Homodimer. Homotetramer. Dimerizes through interaction of two opposing nucleotide-binding domains. Interacts with E2 component of the branched-chain alpha-ketoacid dehydrogenase (BCKDH) complex. Competes with BCKDK for binding to the E2 component; this interaction is modulated by branched-chain alpha-keto acids. At steady state, BCKDH holoenzyme contains BCKDK and BCKDHA is phosphorylated. In response to high levels of branched-chain alpha-keto acids, the inhibitory BCKDK is replaced by activating PPM1K leading to BCKDHA dephosphorylation and BCAA degradation. Autophosphorylated. Ubiquitous.

The protein localises to the mitochondrion matrix. The catalysed reaction is L-seryl-[3-methyl-2-oxobutanoate dehydrogenase] + ATP = O-phospho-L-seryl-[3-methyl-2-oxobutanoate dehydrogenase] + ADP + H(+). The enzyme catalyses L-seryl-[protein] + ATP = O-phospho-L-seryl-[protein] + ADP + H(+). It participates in protein modification. Its activity is regulated as follows. Allosterically inhibited by certain thiazoles and thiophenes: thiazoles increase interaction with DBT/BCKDH-E2, whereas thiophenes reduce this interaction. Inhibited by 3,6- dichlorobenzo[b]thiophene-2-carboxylic acid (BT2). The ATP binding is mediated by both potassium and magnesium ions. Functionally, serine/threonine-protein kinase component of macronutrients metabolism. Forms a functional kinase and phosphatase pair with PPM1K, serving as a metabolic regulatory node that coordinates branched-chain amino acids (BCAAs) with glucose and lipid metabolism via two distinct phosphoprotein targets: mitochondrial BCKDHA subunit of the branched-chain alpha-ketoacid dehydrogenase (BCKDH) complex and cytosolic ACLY, a lipogenic enzyme of Krebs cycle. Phosphorylates and inactivates mitochondrial BCKDH complex a multisubunit complex consisting of three multimeric components each involved in different steps of BCAA catabolism: E1 composed of BCKDHA and BCKDHB, E2 core composed of DBT monomers, and E3 composed of DLD monomers. Associates with the E2 component of BCKDH complex and phosphorylates BCKDHA on Ser-337, leading to conformational changes that interrupt substrate channeling between E1 and E2 and inactivates the BCKDH complex. Phosphorylates ACLY on Ser-455 in response to changes in cellular carbohydrate abundance such as occurs during fasting to feeding metabolic transition. Refeeding stimulates MLXIPL/ChREBP transcription factor, leading to increased BCKDK to PPM1K expression ratio, phosphorylation and activation of ACLY that ultimately results in the generation of malonyl-CoA and oxaloacetate immediate substrates of de novo lipogenesis and glucogenesis, respectively. Recognizes phosphosites having SxxE/D canonical motif. This is Branched-chain alpha-ketoacid dehydrogenase kinase from Homo sapiens (Human).